We begin with the raw amino-acid sequence, 85 residues long: uncharacterized protein (85 aa).

Ser-22 carries the post-translational modification Phosphoserine.

It localises to the cytoplasm. The protein resides in the nucleus. This is an uncharacterized protein from Saccharomyces cerevisiae (strain ATCC 204508 / S288c) (Baker's yeast).